The following is a 258-amino-acid chain: Neurotrophin-3 (258 aa).

Positions 1-18 are cleaved as a signal peptide; the sequence is MSILFYVIFLAYLRGIQG. The propeptide occupies 19–139; it reads NSMDQRSLPE…ANRTSPRRKR (121 aa). A disordered region spans residues 60 to 85; sequence QSTLPKAEAPREPEQGEATRSEFQPM. A compositionally biased stretch (basic and acidic residues) spans 67-79; sequence EAPREPEQGEATR. N-linked (GlcNAc...) asparagine glycosylation is present at Asn-131. 3 cysteine pairs are disulfide-bonded: Cys-153-Cys-218, Cys-196-Cys-247, and Cys-206-Cys-249.

This sequence belongs to the NGF-beta family. In terms of tissue distribution, brain and peripheral tissues.

The protein localises to the secreted. Its function is as follows. Seems to promote the survival of visceral and proprioceptive sensory neurons. The sequence is that of Neurotrophin-3 (Ntf3) from Mus musculus (Mouse).